The sequence spans 331 residues: Ferredoxin--NADP reductase (331 aa).

Residues E38, Q46, Y51, A91, L125, D282, and S323 each coordinate FAD.

This sequence belongs to the ferredoxin--NADP reductase type 2 family. In terms of assembly, homodimer. The cofactor is FAD.

The catalysed reaction is 2 reduced [2Fe-2S]-[ferredoxin] + NADP(+) + H(+) = 2 oxidized [2Fe-2S]-[ferredoxin] + NADPH. In Deinococcus geothermalis (strain DSM 11300 / CIP 105573 / AG-3a), this protein is Ferredoxin--NADP reductase.